A 591-amino-acid chain; its full sequence is V-type ATP synthase alpha chain (591 aa).

G233–T240 is an ATP binding site.

It belongs to the ATPase alpha/beta chains family.

It carries out the reaction ATP + H2O + 4 H(+)(in) = ADP + phosphate + 5 H(+)(out). Its function is as follows. Produces ATP from ADP in the presence of a proton gradient across the membrane. The V-type alpha chain is a catalytic subunit. The polypeptide is V-type ATP synthase alpha chain (Streptococcus pyogenes serotype M5 (strain Manfredo)).